The sequence spans 816 residues: Phosphatidylinositol 4-kinase beta (816 aa).

Residues 1–30 form a disordered region; it reads MGDTVVEPTPLKPTSESTPGPAGSNGGSLL. Residue G2 is modified to N-acetylglycine. The tract at residues 2 to 68 is interaction with ACBD3; it reads GDTVVEPTPL…VKLLHGGVAI (67 aa). One can recognise a PIK helical domain in the interval 52–242; that stretch reads CQEVLEKVKL…GTKLRKLILS (191 aa). Residues 248 to 318 form a disordered region; it reads AHRKRELPSL…TESIDNSFSS (71 aa). Position 258 is a phosphoserine (S258). Phosphothreonine is present on T263. Phosphoserine is present on residues S266, S275, S277, S284, and S294. Polar residues-rich tracts occupy residues 278 to 297 and 306 to 318; these read DATA…SNPK and SSST…SFSS. Position 428 is a phosphoserine (S428). T438 is subject to Phosphothreonine. Residue S511 is modified to Phosphoserine. 2 positions are modified to phosphothreonine: T517 and T519. The PI3K/PI4K catalytic domain occupies 535–801; it reads EPWQEKVRRI…MVDGSMRSIT (267 aa). The tract at residues 541-547 is G-loop; it reads VRRIREG. The segment at 668-676 is catalytic loop; sequence QVKDRHNGN. Residues 687-711 are activation loop; it reads HIDFGFILSSSPRNLGFETSAFKLT.

Belongs to the PI3/PI4-kinase family. Type III PI4K subfamily. As to quaternary structure, interacts with ARF1 and ARF3 in the Golgi complex, but not with ARF4, ARF5 or ARF6. Interacts with NCS1/FREQ in a calcium-independent manner. Interacts with CALN1/CABP8 and CALN2/CABP7; in a calcium-dependent manner; this interaction competes with NCS1/FREQ binding. Interacts with ACBD3. Interacts with ARMH3, YWHAB, YWHAE, YWHAG, YWHAH, YWHAQ, YWHAZ and SFN. Interacts with GGA2 (via VHS domain); the interaction is important for PI4KB location at the Golgi apparatus membrane. Interacts with ATG9A. Mg(2+) serves as cofactor. The cofactor is Mn(2+).

The protein resides in the endomembrane system. It localises to the mitochondrion outer membrane. The protein localises to the rough endoplasmic reticulum membrane. Its subcellular location is the golgi apparatus. It is found in the golgi apparatus membrane. It catalyses the reaction a 1,2-diacyl-sn-glycero-3-phospho-(1D-myo-inositol) + ATP = a 1,2-diacyl-sn-glycero-3-phospho-(1D-myo-inositol 4-phosphate) + ADP + H(+). With respect to regulation, inhibited by wortmannin. Increased kinase activity upon interaction with NCS1/FREQ. In terms of biological role, phosphorylates phosphatidylinositol (PI) in the first committed step in the production of the second messenger inositol-1,4,5,-trisphosphate (PIP). May regulate Golgi disintegration/reorganization during mitosis, possibly via its phosphorylation. Involved in Golgi-to-plasma membrane trafficking. May play an important role in the inner ear development. The polypeptide is Phosphatidylinositol 4-kinase beta (PI4KB) (Otolemur garnettii (Small-eared galago)).